Here is a 271-residue protein sequence, read N- to C-terminus: Cytochrome b termination protein 1 (271 aa).

Its subcellular location is the mitochondrion. Involved in 5'-end processing of mitochondrial COB, 15S rRNA, and RPM1 transcript. May also have a role in 3'-end processing of the COB pre-mRNA. This chain is Cytochrome b termination protein 1 (CBT1), found in Saccharomyces cerevisiae (strain ATCC 204508 / S288c) (Baker's yeast).